Consider the following 233-residue polypeptide: MSVISMKQLLEAGVHFGHQTRRWNPKMKRYIFTERNGIYIIDLQKTVKKVEEAFNVMRNIAAEGGDILFVGTKKQAQEAIKEEATRAGMYFVNQRWLGGTLTNFQTIQKRIKRLKDIERMQEDGTFDVLPKKEVVQLKKELERLEKFLGGIKDMKGLPSALFVVDPRKERIAVAEARKLNIPIIGIVDTNCDPDEIDHVIPANDDAIRAVKLLTSKMADAILEAKQGEETVTA.

This sequence belongs to the universal ribosomal protein uS2 family.

This chain is Small ribosomal subunit protein uS2, found in Bacillus cytotoxicus (strain DSM 22905 / CIP 110041 / 391-98 / NVH 391-98).